A 197-amino-acid polypeptide reads, in one-letter code: Probable adenylyl-sulfate kinase (197 aa).

33-40 (GLSGSGKS) is a binding site for ATP. The active-site Phosphoserine intermediate is the serine 107.

Belongs to the APS kinase family.

The catalysed reaction is adenosine 5'-phosphosulfate + ATP = 3'-phosphoadenylyl sulfate + ADP + H(+). It functions in the pathway sulfur metabolism; hydrogen sulfide biosynthesis; sulfite from sulfate: step 2/3. In terms of biological role, catalyzes the synthesis of activated sulfate. The sequence is that of Probable adenylyl-sulfate kinase (cysC) from Bacillus subtilis (strain 168).